The chain runs to 340 residues: Cyclic GMP-AMP synthase-like receptor 3 (340 aa).

ATP-binding positions include S62 and 74–76 (EAD). E74, D76, and D177 together coordinate Mg(2+). ATP is bound by residues K241 and 255-259 (SYHLK). Mn(2+)-binding residues include D267 and D270.

Belongs to the mab-21 family. It depends on Mg(2+) as a cofactor. Mn(2+) is required as a cofactor.

It carries out the reaction 2 ATP = 3',3'-c-di-AMP + 2 diphosphate. Functionally, nucleotidyltransferase that catalyzes the formation of cyclic di-AMP (3',3'-c-di-AMP) from 2 molecules of ATP and plays a key role in innate immunity. Acts as a key sensor of double-stranded RNA (dsRNA), the presence of dsRNA in the cytoplasm being a danger signal that triggers the immune responses. Directly binds dsRNA, activating the nucleotidyltransferase activity, leading to synthesis of 3',3'-c-di-AMP, a second messenger that binds to and activates Sting, thereby triggering the immune response via activation of the NF-kappa-B transcription factor. The chain is Cyclic GMP-AMP synthase-like receptor 3 from Stylophora pistillata (Smooth cauliflower coral).